We begin with the raw amino-acid sequence, 479 residues long: MSILVKNNIHWVGQRDWEVRDFHGTEYKTLRGSSYNSYLIREEKNVLIDTVDHKFSREFVQNLRSEIDLADIDYIIINHAEEDHAGALTELMAQIPDTPIYCTANAIDSINGHHHHPEWNFKVVKTGDTLDIGNGKQLIFVETPMLHWPDSMMTYMTGDAVLFSNDAFGQHYCDERLFNDEVDQTELFEQCQRYYANILTPFSRLVTPKITEILGFNLPVDMIATSHGVVWRDNPTQIVELYLKWAADYQEDRITIFYDTMSNNTRMMADAIAQGINEVDPNVAVKIFNVARSDKNEILTNVFRSKGVLVGTSTMNNVMMPKIAGLVEEMTGLRFRNKRASAFGSHGWSGGAVDRLSTRLQDAGFEMSLSLKAKWRPDLDALELCRQHGRDIARQWALAPLPETTQKTAPVEETTTCAAADLGPKMQCSVCQWIYDPALGEPLQDVAPGTPWSDVPDNFLCPECSLGKDVFDVLATEAK.

The zinc metallo-hydrolase stretch occupies residues 30 to 210 (LRGSSYNSYL…PFSRLVTPKI (181 aa)). Positions 79, 81, 83, 147, 166, and 227 each coordinate Fe cation. Residues 254 to 393 (ITIFYDTMSN…LCRQHGRDIA (140 aa)) form the Flavodoxin-like domain. FMN contacts are provided by residues 260 to 264 (TMSNN) and 342 to 369 (AFGS…EMSL). In terms of domain architecture, Rubredoxin-like spans 423-474 (GPKMQCSVCQWIYDPALGEPLQDVAPGTPWSDVPDNFLCPECSLGKDVFDVL). Residues C428, C431, C461, and C464 each contribute to the Fe cation site.

This sequence in the N-terminal section; belongs to the zinc metallo-hydrolase group 3 family. Homotetramer. Fe cation serves as cofactor. The cofactor is FMN.

It localises to the cytoplasm. It functions in the pathway nitrogen metabolism; nitric oxide reduction. Functionally, anaerobic nitric oxide reductase; uses NADH to detoxify nitric oxide (NO), protecting several 4Fe-4S NO-sensitive enzymes. Has at least 2 reductase partners, only one of which (NorW, flavorubredoxin reductase) has been identified. NO probably binds to the di-iron center; electrons enter from the NorW at rubredoxin and are transferred sequentially to the FMN center and the di-iron center. Also able to function as an aerobic oxygen reductase. The chain is Anaerobic nitric oxide reductase flavorubredoxin from Salmonella paratyphi B (strain ATCC BAA-1250 / SPB7).